Reading from the N-terminus, the 204-residue chain is MIKFVIDTSAVTDPRLRQLFGVNELWEVVEKYLELMALAKLKLGFSFYTTPSVMKEIKGFLERSMCPSEIISKLGVWILVKDVSQTEAKIPARVFLEYVAEVKRRLDKGLRVAEESTRRAMEGGEIGEHIRNLREKYREATRKGLLDSVADLEAAILALELGAVLVTNDEGLCKLASKLGVSCIDPLTFVKTIEEYLNLIKRHG.

Belongs to the HARP family.

The catalysed reaction is Endonucleolytic cleavage of RNA, removing 5'-extranucleotides from tRNA precursor.. In terms of biological role, RNA-free RNase P that catalyzes the removal of the 5'-leader sequence from pre-tRNA to produce the mature 5'-terminus. The sequence is that of RNA-free ribonuclease P from Ignicoccus hospitalis (strain KIN4/I / DSM 18386 / JCM 14125).